A 320-amino-acid chain; its full sequence is Malate dehydrogenase (320 aa).

Residues 10–15 and Asp34 contribute to the NAD(+) site; that span reads GAGQIG. Substrate is bound by residues Arg83 and Arg89. NAD(+) is bound by residues Asn96 and 119-121; that span reads ITN. Substrate-binding residues include Asn121 and Arg152. The Proton acceptor role is filled by His176.

This sequence belongs to the LDH/MDH superfamily. MDH type 3 family.

It carries out the reaction (S)-malate + NAD(+) = oxaloacetate + NADH + H(+). In terms of biological role, catalyzes the reversible oxidation of malate to oxaloacetate. The polypeptide is Malate dehydrogenase (Beijerinckia indica subsp. indica (strain ATCC 9039 / DSM 1715 / NCIMB 8712)).